The chain runs to 321 residues: MTKYALVGDVGGTNARLALCDIASGEISQAKTYSGLDYPSLEAVIRVYLEEHKVEVKDGCIAIACPITGDWVAMTNHTWAFSIAEMKKNLGFSYLEIINDFTAVSMAIPMLKKEHLIQFGGAEPVEGKPIAVYGAGTGLGVAHLVHVDKRWVSLPGEGGHVDFAPNSEEEGIILEILRAEIGHVSAERVLSGPGLVNLYRAIVKADNRLPENLKPKDITERALADSCTDCRRALSLFCVIMGRFGGNLALNLGTFGGVFIAGGIVPRFLEFFKASGFRAAFEDKGRFKEYVHDIPVYLIVHDNPGLLGSGAHLRQTLGHIL.

8 to 13 contacts ATP; that stretch reads GDVGGT.

Belongs to the bacterial glucokinase family.

The protein localises to the cytoplasm. It catalyses the reaction D-glucose + ATP = D-glucose 6-phosphate + ADP + H(+). This Escherichia coli (strain SMS-3-5 / SECEC) protein is Glucokinase.